The following is a 357-amino-acid chain: Alanine racemase (357 aa).

Lys-35 functions as the Proton acceptor; specific for D-alanine in the catalytic mechanism. The residue at position 35 (Lys-35) is an N6-(pyridoxal phosphate)lysine. Arg-130 serves as a coordination point for substrate. Tyr-255 serves as the catalytic Proton acceptor; specific for L-alanine. Met-303 is a substrate binding site.

It belongs to the alanine racemase family. Requires pyridoxal 5'-phosphate as cofactor.

The enzyme catalyses L-alanine = D-alanine. It functions in the pathway amino-acid biosynthesis; D-alanine biosynthesis; D-alanine from L-alanine: step 1/1. Catalyzes the interconversion of L-alanine and D-alanine. May also act on other amino acids. This chain is Alanine racemase (alr), found in Nitrosospira multiformis (strain ATCC 25196 / NCIMB 11849 / C 71).